A 498-amino-acid polypeptide reads, in one-letter code: Cytochrome P450 71D15 (498 aa).

Residues 3 to 23 (LLQLWSALIILVVTYTISLLI) form a helical; Signal-anchor for type II membrane protein membrane-spanning segment. C437 serves as a coordination point for heme.

This sequence belongs to the cytochrome P450 family. Requires heme as cofactor.

It is found in the endoplasmic reticulum membrane. It carries out the reaction (4S)-limonene + reduced [NADPH--hemoprotein reductase] + O2 = (1S,6R)-isopiperitenol + oxidized [NADPH--hemoprotein reductase] + H2O + H(+). In terms of biological role, hydroxylates (-)-(4S)-limonene to (-)-trans-isopiperitenol, a precursor of (-)-menthol, responsible for the cooling sensation of peppermint. Fluorinated substrate analogs are hydroxylated with the same regio- and stereochemistry. This Mentha piperita (Peppermint) protein is Cytochrome P450 71D15 (CYP71D15).